A 266-amino-acid polypeptide reads, in one-letter code: Integral membrane protein 2B (266 aa).

Residues 1 to 54 (MVKVTFNSALAQKEAKKDEPKSSEEALIAPPDAVAVDCKDPDDVVPVGQRRAWC) lie on the Cytoplasmic side of the membrane. The chain crosses the membrane as a helical; Signal-anchor for type II membrane protein span at residues 55–75 (WCMCFGLAFMLAGVILGGAYL). Over 76 to 266 (YKYFALQPDD…KFAVETLICS (191 aa)) the chain is Lumenal. The interval 102 to 134 (EPSADAPAARYQTIEENIKIFEEDAVEFISVPV) is necessary for interaction with APP and inhibitor effects on APP processing. The BRICHOS domain maps to 137-231 (FADSDPANIV…LCHDKETYKL (95 aa)). Intrachain disulfides connect cysteine 164/cysteine 223 and cysteine 248/cysteine 265. N-linked (GlcNAc...) asparagine glycosylation occurs at asparagine 170.

The protein belongs to the ITM2 family. In terms of assembly, homodimer; disulfide-linked. Interacts with SPPL2A and SPPL2B. Interacts with APP. Mature BRI2 (mBRI2) interacts with the APP amyloid-beta A4 protein; the interaction occurs at the cell surface and in the endocytic compartments and enable alpha- and beta-secretase-induced APP cleavage inhibition. Mature BRI2 (mBRI2) interacts with the APP C99; the interaction occurs in the endocytic compartments and enable gamma-secretase-induced C99 cleavage inhibition. May form heterodimers with Bri23 peptide and APP amyloid-beta protein 40. Interacts with ADAM7 in sperm; the interaction increases following capacitation. The ectodomain C-terminal part of the imBRI2 is processed by furin producing a secreted Bri23 peptide and a mature BRI2, membrane form (mBRI2). The remaining part of the ectodomain of mBRI2 containing the BRICHOS domain is cleaved by ADAM10 and is secreted (BRI2C, soluble form). The membrane-bound N-terminal fragment (BRI2C, membrane form) is further proteolytically processed by SPPL2A and SPPL2B through regulated intramembrane proteolysis producing a secreted C-peptide and a BRI2 intracellular domain (BRI2 ICD) released in the cytosol. Shedding by ADAM10 facilitates intramembrane cleavage but is not absolutely required for BRI2 ICD generation. Post-translationally, glycosylation at Asn-170 is important for cell surface localization, but doesn't affect furin- and ADAM10-induced proteolytic processing.

The protein localises to the golgi apparatus membrane. It localises to the cell membrane. Its subcellular location is the endosome membrane. It is found in the secreted. Its function is as follows. Plays a regulatory role in the processing of the amyloid-beta A4 precursor protein (APP) and acts as an inhibitor of the amyloid-beta peptide aggregation and fibrils deposition. Plays a role in the induction of neurite outgrowth. Functions as a protease inhibitor by blocking access of secretases to APP cleavage sites. Functionally, mature BRI2 (mBRI2) functions as a modulator of the amyloid-beta A4 precursor protein (APP) processing leading to a strong reduction in the secretion of secretase-processed amyloid-beta protein 40 and amyloid-beta protein 42. In terms of biological role, bri23 peptide prevents aggregation of APP amyloid-beta protein 42 into toxic oligomers. This is Integral membrane protein 2B (Itm2b) from Rattus norvegicus (Rat).